Reading from the N-terminus, the 395-residue chain is Elongation factor Tu (395 aa).

The tr-type G domain maps to 10-204 (KPHVNIGTIG…AVDEYIPTPQ (195 aa)). Positions 19 to 26 (GHVDHGKT) are G1. 19 to 26 (GHVDHGKT) provides a ligand contact to GTP. T26 contributes to the Mg(2+) binding site. A G2 region spans residues 60 to 64 (GITIS). Residues 81–84 (DCPG) form a G3 region. GTP is bound by residues 81-85 (DCPGH) and 136-139 (NKCD). The interval 136–139 (NKCD) is G4. The tract at residues 174–176 (SAL) is G5.

The protein belongs to the TRAFAC class translation factor GTPase superfamily. Classic translation factor GTPase family. EF-Tu/EF-1A subfamily. Monomer.

It is found in the cytoplasm. It carries out the reaction GTP + H2O = GDP + phosphate + H(+). In terms of biological role, GTP hydrolase that promotes the GTP-dependent binding of aminoacyl-tRNA to the A-site of ribosomes during protein biosynthesis. This chain is Elongation factor Tu, found in Geobacillus kaustophilus (strain HTA426).